A 721-amino-acid polypeptide reads, in one-letter code: Angiomotin-like 2a (721 aa).

The interval 35-84 is disordered; the sequence is QQALRGGSSGGGAGSPRSSLESLTQEESLSPQLSARQEPQGQEHQGDFQH. Low complexity predominate over residues 49-68; sequence SPRSSLESLTQEESLSPQLS. Phosphotyrosine; by FGFR1 is present on Tyr-103. Residues 169-214 form a disordered region; that stretch reads DNIPMSSSHSYPQLSNNHSDTVVNEQSVHQPDQRGPPPEYPFMVRS. Residues 172-198 are compositionally biased toward polar residues; sequence PMSSSHSYPQLSNNHSDTVVNEQSVHQ. Residues 275–531 adopt a coiled-coil conformation; it reads ANNFQMEQLI…TRWEQKYLEE (257 aa). The segment covering 554-567 has biased composition (polar residues); the sequence is INHSPRNSPNSSFN. Disordered stretches follow at residues 554–575 and 666–709; these read INHS…SPNH and DSST…TQIS. Residues 688–702 show a composition bias toward low complexity; the sequence is SAPEPSTASSSESTS. The PDZ-binding motif lies at 718 to 721; that stretch reads EILI.

It belongs to the angiomotin family. In terms of assembly, interacts with SRC. Post-translationally, phosphorylation at Tyr-103 is necessary for efficient binding to SRC and synergistically functioning with SRC to activate the downstream MAPK pathway. As to expression, expressed in endothelial cells.

It localises to the recycling endosome. Its subcellular location is the cytoplasm. The protein resides in the cell projection. It is found in the podosome. The protein localises to the cell junction. Functionally, required for proper architecture of actin filaments and for cell movements during embryogenesis. Plays a role in the radial actin fiber architecture in skin epithelial cells, thereby maintains cell geometry, size and cell interconnectivity within the skin. Plays an important role in coupling actin fibers to cell junctions in endothelial cells and is therefore required for correct endothelial cell morphology and maintenance of dorsal aorta lumen expansion during embryogenesis. May further play a role in the polarity, proliferation and migration of endothelial cells, and therefore participates in angiogenesis. Inhibits the Wnt/beta-catenin signaling pathway, probably by recruiting CTNNB1 to recycling endosomes and hence preventing its translocation to the nucleus. Regulates the translocation of phosphorylated SRC to peripheral cell-matrix adhesion sites. Selectively promotes FGF-induced MAPK activation through SRC. The sequence is that of Angiomotin-like 2a (amotl2a) from Danio rerio (Zebrafish).